The chain runs to 1415 residues: DNA-directed RNA polymerase subunit beta' (1415 aa).

Zn(2+) contacts are provided by C72, C74, C87, and C90. Residues D463, D465, and D467 each contribute to the Mg(2+) site. C812, C886, C893, and C896 together coordinate Zn(2+).

This sequence belongs to the RNA polymerase beta' chain family. In terms of assembly, the RNAP catalytic core consists of 2 alpha, 1 beta, 1 beta' and 1 omega subunit. When a sigma factor is associated with the core the holoenzyme is formed, which can initiate transcription. Mg(2+) serves as cofactor. Zn(2+) is required as a cofactor.

It carries out the reaction RNA(n) + a ribonucleoside 5'-triphosphate = RNA(n+1) + diphosphate. DNA-dependent RNA polymerase catalyzes the transcription of DNA into RNA using the four ribonucleoside triphosphates as substrates. The protein is DNA-directed RNA polymerase subunit beta' of Dinoroseobacter shibae (strain DSM 16493 / NCIMB 14021 / DFL 12).